Here is a 306-residue protein sequence, read N- to C-terminus: N-acetylmuramic acid 6-phosphate etherase (306 aa).

In terms of domain architecture, SIS spans 55–218 (IVPRMKKGGR…STGVMIKLGK (164 aa)). Residue Glu-83 is the Proton donor of the active site. The active site involves Glu-114.

This sequence belongs to the GCKR-like family. MurNAc-6-P etherase subfamily. As to quaternary structure, homodimer.

It catalyses the reaction N-acetyl-D-muramate 6-phosphate + H2O = N-acetyl-D-glucosamine 6-phosphate + (R)-lactate. Its pathway is amino-sugar metabolism; N-acetylmuramate degradation. In terms of biological role, specifically catalyzes the cleavage of the D-lactyl ether substituent of MurNAc 6-phosphate, producing GlcNAc 6-phosphate and D-lactate. The sequence is that of N-acetylmuramic acid 6-phosphate etherase from Caldanaerobacter subterraneus subsp. tengcongensis (strain DSM 15242 / JCM 11007 / NBRC 100824 / MB4) (Thermoanaerobacter tengcongensis).